Reading from the N-terminus, the 254-residue chain is uncharacterized protein (254 aa).

It belongs to the MtxX family.

This is an uncharacterized protein from Methanopyrus kandleri (strain AV19 / DSM 6324 / JCM 9639 / NBRC 100938).